Reading from the N-terminus, the 70-residue chain is Conotoxin AbVIC (70 aa).

The signal sequence occupies residues 1 to 17 (VLIIAVLFLTACQLTTA). The propeptide occupies 18–41 (ETSSRGKQKHRALRSTDKNSKLTR). The interval 19–41 (TSSRGKQKHRALRSTDKNSKLTR) is disordered. Disulfide bonds link C43-C57, C50-C61, and C56-C68.

The protein belongs to the conotoxin O1 superfamily. In terms of tissue distribution, expressed by the venom duct.

The protein resides in the secreted. The protein is Conotoxin AbVIC of Conus abbreviatus (Abbreviated cone).